The following is a 159-amino-acid chain: MQSTQDYIEMRLPASAEYVSLIRLTLSGVFSRAGASYDDIEDSKIAVSEAVTNAVKHAYKKNSEIGMINLCFEIFDDRIKIVISDQGESFDYEATKSHLGPYNDNENIDFLREGGLGLFLIESLMDEVTVYKESGVTISMIKYIKKEQVRNNGERVEIS.

Belongs to the anti-sigma-factor family.

It catalyses the reaction L-seryl-[protein] + ATP = O-phospho-L-seryl-[protein] + ADP + H(+). The catalysed reaction is L-threonyl-[protein] + ATP = O-phospho-L-threonyl-[protein] + ADP + H(+). Functionally, negative regulator of sigma-B activity. Phosphorylates and inactivates its specific antagonist protein, RsbV. Upon phosphorylation of RsbV, RsbW is released and binds to sigma-B, thereby blocking its ability to form an RNA polymerase holoenzyme (E-sigma-B). The sequence is that of Serine-protein kinase RsbW from Staphylococcus epidermidis.